The sequence spans 164 residues: uncharacterized protein (164 aa).

The signal sequence occupies residues 1–22 (MKTNRSLVVIVSLITATLLLTA). A lipid anchor (N-palmitoyl cysteine) is attached at Cys23. Cys23 carries S-diacylglycerol cysteine lipidation.

The protein resides in the cell membrane. This is an uncharacterized protein from Escherichia coli (strain K12).